The chain runs to 660 residues: Phosphatidylinositol-binding clathrin assembly protein (660 aa).

Ser-2 bears the N-acetylserine mark. Positions 14–145 (QHSVTGSAVS…VSYRQVAFDF (132 aa)) constitute an ENTH domain. Residues Ser-16 and Ser-20 each carry the phosphoserine modification. Residues 221-294 (KYFDMKKNQC…LEGKKIKDST (74 aa)) are interaction with PIMREG. Residue Lys-238 forms a Glycyl lysine isopeptide (Lys-Gly) (interchain with G-Cter in SUMO2) linkage. Phosphoserine is present on residues Ser-303 and Ser-315. The span at 556 to 566 (GTTKNDVSWSQ) shows a compositional bias: polar residues. Residues 556–580 (GTTKNDVSWSQPGEKKLTGGSNWQP) form a disordered region.

It belongs to the PICALM/SNAP91 family. As to quaternary structure, binds to clathrin; involves primarily the C-terminal sequences, but the full-length protein is required for full binding capacity. Binds phosphatidylinositol 4,5- bisphosphate. Interacts with PIMREG; this interaction may change the subcellular location into the nucleus. Interacts with AP2A1 (via its alpha-appendage domain). Interacts (via N-terminus) with VAMP2; VAMP3; VAMP7 and VAMP8 (Via N-terminus). Interacts with LC3/MAP1LC3A. Skins and livers of 1-week-old mice.

Its subcellular location is the cell membrane. The protein localises to the membrane. It localises to the clathrin-coated pit. The protein resides in the golgi apparatus. It is found in the cytoplasmic vesicle. Its subcellular location is the clathrin-coated vesicle. The protein localises to the nucleus. In terms of biological role, cytoplasmic adapter protein that plays a critical role in clathrin-mediated endocytosis which is important in processes such as internalization of cell receptors, synaptic transmission or removal of apoptotic cells. Recruits AP-2 and attaches clathrin triskelions to the cytoplasmic side of plasma membrane leading to clathrin-coated vesicles (CCVs) assembly. Furthermore, regulates clathrin-coated vesicle size and maturation by directly sensing and driving membrane curvature. In addition to binding to clathrin, mediates the endocytosis of small R-SNARES (Soluble NSF Attachment Protein REceptors) between plasma membranes and endosomes including VAMP2, VAMP3, VAMP4, VAMP7 or VAMP8. In turn, PICALM-dependent SNARE endocytosis is required for the formation and maturation of autophagic precursors. Modulates thereby autophagy and the turnover of autophagy substrates such as MAPT/TAU or amyloid precursor protein cleaved C-terminal fragment (APP-CTF). This is Phosphatidylinositol-binding clathrin assembly protein (Picalm) from Mus musculus (Mouse).